Here is a 351-residue protein sequence, read N- to C-terminus: Homoserine O-acetyltransferase (351 aa).

Residues 51–334 (VIWVLHALTG…IYGHDAFLIE (284 aa)) form the AB hydrolase-1 domain. Ser-146 (nucleophile) is an active-site residue. Residue Arg-212 coordinates substrate. Catalysis depends on residues Asp-299 and His-328. Residue Asp-329 coordinates substrate.

The protein belongs to the AB hydrolase superfamily. MetX family. In terms of assembly, homodimer.

The protein resides in the cytoplasm. The enzyme catalyses L-homoserine + acetyl-CoA = O-acetyl-L-homoserine + CoA. It functions in the pathway amino-acid biosynthesis; L-methionine biosynthesis via de novo pathway; O-acetyl-L-homoserine from L-homoserine: step 1/1. Its function is as follows. Transfers an acetyl group from acetyl-CoA to L-homoserine, forming acetyl-L-homoserine. This Cyclobacterium marinum (strain ATCC 25205 / DSM 745 / LMG 13164 / NCIMB 1802) (Flectobacillus marinus) protein is Homoserine O-acetyltransferase.